The following is a 295-amino-acid chain: Maintenance of mitochondrial morphology protein 1 (295 aa).

Topologically, residues 1-12 (MVQLFHLTFTQG) are lumenal. Residues 13–33 (FFIGQLSVIVIVYIFLRFFLF) traverse the membrane as a helical segment. Residues 34–295 (CTKEELKNVQ…REGHRQKSTE (262 aa)) are Cytoplasmic-facing. Residues 81 to 278 (EEESLDWFNV…SPQFQQISIP (198 aa)) enclose the SMP-LTD domain.

This sequence belongs to the MMM1 family. Homodimer. Component of the ER-mitochondria encounter structure (ERMES) or MDM complex, composed of mmm1, mdm10, mdm12 and mdm34. A mmm1 homodimer associates with one molecule of mdm12 on each side in a pairwise head-to-tail manner, and the SMP-LTD domains of mmm1 and mdm12 generate a continuous hydrophobic tunnel for phospholipid trafficking.

It is found in the endoplasmic reticulum membrane. Functionally, component of the ERMES/MDM complex, which serves as a molecular tether to connect the endoplasmic reticulum (ER) and mitochondria. Components of this complex are involved in the control of mitochondrial shape and protein biogenesis, and function in nonvesicular lipid trafficking between the ER and mitochondria. The mdm12-mmm1 subcomplex functions in the major beta-barrel assembly pathway that is responsible for biogenesis of all outer membrane beta-barrel proteins, and acts in a late step after the SAM complex. The mdm10-mdm12-mmm1 subcomplex further acts in the TOM40-specific pathway after the action of the mdm12-mmm1 complex. Essential for establishing and maintaining the structure of mitochondria and maintenance of mtDNA nucleoids. This is Maintenance of mitochondrial morphology protein 1 from Schizosaccharomyces japonicus (strain yFS275 / FY16936) (Fission yeast).